The following is a 521-amino-acid chain: Bifunctional purine biosynthesis protein PurH (521 aa).

The MGS-like domain maps to 1–145; the sequence is MIKQALISVS…KNHKDVIVIC (145 aa).

It belongs to the PurH family.

The catalysed reaction is (6R)-10-formyltetrahydrofolate + 5-amino-1-(5-phospho-beta-D-ribosyl)imidazole-4-carboxamide = 5-formamido-1-(5-phospho-D-ribosyl)imidazole-4-carboxamide + (6S)-5,6,7,8-tetrahydrofolate. The enzyme catalyses IMP + H2O = 5-formamido-1-(5-phospho-D-ribosyl)imidazole-4-carboxamide. Its pathway is purine metabolism; IMP biosynthesis via de novo pathway; 5-formamido-1-(5-phospho-D-ribosyl)imidazole-4-carboxamide from 5-amino-1-(5-phospho-D-ribosyl)imidazole-4-carboxamide (10-formyl THF route): step 1/1. It functions in the pathway purine metabolism; IMP biosynthesis via de novo pathway; IMP from 5-formamido-1-(5-phospho-D-ribosyl)imidazole-4-carboxamide: step 1/1. The chain is Bifunctional purine biosynthesis protein PurH from Janthinobacterium sp. (strain Marseille) (Minibacterium massiliensis).